Here is a 99-residue protein sequence, read N- to C-terminus: NADH dehydrogenase [ubiquinone] 1 alpha subcomplex subunit 2 (99 aa).

Alanine 2 carries the N-acetylalanine modification. An intrachain disulfide couples cysteine 24 to cysteine 58. An N6-acetyllysine; alternate modification is found at lysine 64. An N6-succinyllysine; alternate modification is found at lysine 64.

The protein belongs to the complex I NDUFA2 subunit family. Complex I is composed of 45 different subunits.

The protein resides in the mitochondrion inner membrane. Accessory subunit of the mitochondrial membrane respiratory chain NADH dehydrogenase (Complex I), that is believed not to be involved in catalysis. Complex I functions in the transfer of electrons from NADH to the respiratory chain. The immediate electron acceptor for the enzyme is believed to be ubiquinone. The sequence is that of NADH dehydrogenase [ubiquinone] 1 alpha subcomplex subunit 2 (NDUFA2) from Gorilla gorilla gorilla (Western lowland gorilla).